The sequence spans 504 residues: Lysine--tRNA ligase (504 aa).

Glutamate 404 and glutamate 411 together coordinate Mg(2+).

It belongs to the class-II aminoacyl-tRNA synthetase family. As to quaternary structure, homodimer. The cofactor is Mg(2+).

The protein resides in the cytoplasm. It catalyses the reaction tRNA(Lys) + L-lysine + ATP = L-lysyl-tRNA(Lys) + AMP + diphosphate. The sequence is that of Lysine--tRNA ligase from Aliarcobacter butzleri (strain RM4018) (Arcobacter butzleri).